The primary structure comprises 695 residues: ATP-dependent zinc metalloprotease FtsH (695 aa).

Topologically, residues 1–15 (MNNNKQPKQGNFVKN) are cytoplasmic. A helical transmembrane segment spans residues 16–36 (ILMWVILAIVVVVGFNFFFSS). The Extracellular segment spans residues 37-139 (NQSSVDKISY…QASSSGMWVQ (103 aa)). The helical transmembrane segment at 140-160 (ILSYIIPMLLFVGIFWLMMGG) threads the bilayer. Residues 161–695 (MGARGGGGGG…KEKSEDETAE (535 aa)) lie on the Cytoplasmic side of the membrane. 233 to 240 (GPPGTGKT) is an ATP binding site. Histidine 456 is a Zn(2+) binding site. Residue glutamate 457 is part of the active site. The Zn(2+) site is built by histidine 460 and aspartate 532. A disordered region spans residues 657–695 (KDANANVDDFSNINIYNGDEKTDSKPEENKEKSEDETAE). A compositionally biased stretch (basic and acidic residues) spans 674–695 (GDEKTDSKPEENKEKSEDETAE).

The protein in the central section; belongs to the AAA ATPase family. In the C-terminal section; belongs to the peptidase M41 family. As to quaternary structure, homohexamer. It depends on Zn(2+) as a cofactor.

The protein localises to the cell membrane. In terms of biological role, acts as a processive, ATP-dependent zinc metallopeptidase for both cytoplasmic and membrane proteins. Plays a role in the quality control of integral membrane proteins. This chain is ATP-dependent zinc metalloprotease FtsH, found in Lactococcus lactis subsp. lactis (strain IL1403) (Streptococcus lactis).